A 693-amino-acid chain; its full sequence is Elongation factor G (693 aa).

The region spanning 8–282 (AKTRNIGIMA…AVIDYLPSPL (275 aa)) is the tr-type G domain. GTP contacts are provided by residues 17–24 (AHVDAGKT), 81–85 (DTPGH), and 135–138 (NKMD).

The protein belongs to the TRAFAC class translation factor GTPase superfamily. Classic translation factor GTPase family. EF-G/EF-2 subfamily.

The protein resides in the cytoplasm. Its function is as follows. Catalyzes the GTP-dependent ribosomal translocation step during translation elongation. During this step, the ribosome changes from the pre-translocational (PRE) to the post-translocational (POST) state as the newly formed A-site-bound peptidyl-tRNA and P-site-bound deacylated tRNA move to the P and E sites, respectively. Catalyzes the coordinated movement of the two tRNA molecules, the mRNA and conformational changes in the ribosome. This Streptococcus thermophilus (strain CNRZ 1066) protein is Elongation factor G.